We begin with the raw amino-acid sequence, 1876 residues long: 1,3-beta-glucan synthase component FKS1 (1876 aa).

Composition is skewed to polar residues over residues 1–25 and 60–71; these read MNTD…QSQE and QPPNESYDQDYT. Residues 1–108 form a disordered region; it reads MNTDQQPYQG…PGTPGYDSYG (108 aa). At 1-454 the chain is on the cytoplasmic side; sequence MNTDQQPYQG…WLHLVTNFNR (454 aa). K259 is covalently cross-linked (Glycyl lysine isopeptide (Lys-Gly) (interchain with G-Cter in ubiquitin)). T269 and T272 each carry phosphothreonine. Glycyl lysine isopeptide (Lys-Gly) (interchain with G-Cter in ubiquitin) cross-links involve residues K275 and K386. The chain crosses the membrane as a helical span at residues 455–475; sequence IWVMHISIFWMYFAYNSPTFY. Over 476–492 the chain is Extracellular; the sequence is THNYQQLVDNQPLAAYK. The chain crosses the membrane as a helical span at residues 493-513; the sequence is WASCALGGTVASLIQIVATLC. Over 514–531 the chain is Cytoplasmic; that stretch reads EWSFVPRKWAGAQHLSRR. Residues 532–552 form a helical membrane-spanning segment; it reads FWFLCIIFGINLGPIIFVFAY. Topologically, residues 553-563 are extracellular; that stretch reads DKDTVYSTAAH. A helical transmembrane segment spans residues 564–584; the sequence is VVAAVMFFVAVATIIFFSIMP. The Cytoplasmic portion of the chain corresponds to 585–621; it reads LGGLFTSYMKKSTRRYVASQTFTAAFAPLHGLDRWMS. A helical transmembrane segment spans residues 622 to 642; sequence YLVWVTVFAAKYSESYYFLVL. Over 643 to 678 the chain is Extracellular; that stretch reads SLRDPIRILSTTAMRCTGEYWWGAVLCKVQPKIVLG. A helical membrane pass occupies residues 679–699; sequence LVIATDFILFFLDTYLWYIIV. At 700–1358 the chain is on the cytoplasmic side; it reads NTIFSVGKSF…QPAVDWVRRY (659 aa). Glycyl lysine isopeptide (Lys-Gly) (interchain with G-Cter in ubiquitin) cross-links involve residues K910 and K915. Residues 1359–1379 traverse the membrane as a helical segment; the sequence is TLSIFIVFWIAFVPIVVQELI. At 1380–1444 the chain is on the extracellular side; it reads ERGLWKATQR…RIPFSILYSR (65 aa). The helical transmembrane segment at 1445–1465 threads the bilayer; it reads FAGSAIYMGARSMLMLLFGTV. The Cytoplasmic portion of the chain corresponds to 1466–1469; sequence AHWQ. A helical transmembrane segment spans residues 1470–1490; it reads APLLWFWASLSSLIFAPFVFN. The Extracellular segment spans residues 1491-1560; the sequence is PHQFAWEDFF…DASRAHRTNL (70 aa). Glycyl lysine isopeptide (Lys-Gly) (interchain with G-Cter in ubiquitin) cross-links involve residues K1539 and K1547. A helical transmembrane segment spans residues 1561–1581; the sequence is IMAEIIPCAIYAAGCFIAFTF. Over 1582–1601 the chain is Cytoplasmic; that stretch reads INAQTGVKTTDDDRVNSVLR. A helical transmembrane segment spans residues 1602–1622; the sequence is IIICTLAPIAVNLGVLFFCMG. The Extracellular portion of the chain corresponds to 1623 to 1643; the sequence is MSCCSGPLFGMCCKKTGSVMA. A helical membrane pass occupies residues 1644–1664; that stretch reads GIAHGVAVIVHIAFFIVMWVL. Residues 1665–1672 are Cytoplasmic-facing; sequence ESFNFVRM. A helical transmembrane segment spans residues 1673–1695; that stretch reads LIGVVTCIQCQRLIFHCMTALML. Residues 1696 to 1802 lie on the Extracellular side of the membrane; the sequence is TREFKNDHAN…RKRMVKKYCS (107 aa). Residues 1803–1823 form a helical membrane-spanning segment; it reads LYFLVLAIFAGCIIGPAVASA. Topologically, residues 1824–1876 are cytoplasmic; it reads KIHKHIGDSLDGVVHNLFQPINTTNNDTGSQMSTYQSHYYTHTPSLKTWSTIK.

This sequence belongs to the glycosyltransferase 48 family. In terms of assembly, component of the 1,3-beta-glucan synthase (GS) complex, composed of two alternate catalytic subunits FKS1 or GSC2, and a regulatory subunit RHO1. Interacts with RHO1, which is a GTP-binding protein.

Its subcellular location is the mitochondrion. The protein localises to the cell membrane. It carries out the reaction [(1-&gt;3)-beta-D-glucosyl](n) + UDP-alpha-D-glucose = [(1-&gt;3)-beta-D-glucosyl](n+1) + UDP + H(+). Functionally, alternate catalytic subunit of the 1,3-beta-glucan synthase (GS) complex. Synthesizes 1,3-beta-glucan, a major structural component of the yeast cell wall. Involved in cell wall synthesis, maintenance and remodeling. The sequence is that of 1,3-beta-glucan synthase component FKS1 (FKS1) from Saccharomyces cerevisiae (strain ATCC 204508 / S288c) (Baker's yeast).